The sequence spans 354 residues: CX3C chemokine receptor 1 (354 aa).

The Extracellular portion of the chain corresponds to 1 to 32 (MSTSFPELDLENFEYDDSAEACYLGDIVAFGT). A helical transmembrane segment spans residues 33–60 (IFLSVFYALVFTFGLVGNLLVVLALTNS). Over 61–70 (RKPKSITDIY) the chain is Cytoplasmic. A helical membrane pass occupies residues 71-91 (LLNLALSDLLFVATLPFWTHY). At 92–104 (LISHEGLHNAMCK) the chain is on the extracellular side. Cys103 and Cys176 are joined by a disulfide. A helical transmembrane segment spans residues 105–126 (LTTAFFFIGFFGGIFFITVISI). Residues 127–143 (DRYLAIVLAANSMNNRT) lie on the Cytoplasmic side of the membrane. The chain crosses the membrane as a helical span at residues 144–168 (VQHGVTISLGVWAAAILVASPQFMF). Topologically, residues 169–196 (TKRKDNECLGDYPEVLQEMWPVLRNSEV) are extracellular. The helical transmembrane segment at 197 to 216 (NILGFALPLLIMSFCYFRII) threads the bilayer. At 217 to 232 (QTLFSCKNRKKARAVR) the chain is on the cytoplasmic side. A helical transmembrane segment spans residues 233–257 (LILLVVFAFFLFWTPYNIMIFLETL). Topologically, residues 258-274 (KFYNFFPSCDMKRDLRL) are extracellular. A helical transmembrane segment spans residues 275–298 (ALSVTETVAFSHCCLNPFIYAFAG). Residues 299–354 (EKFRRYLGHLYRKCLAVLCGHPVHTGFSPESQRSRQDSILSSFTHYTSEGDGSLLL) are Cytoplasmic-facing. Phosphothreonine is present on Thr345.

It belongs to the G-protein coupled receptor 1 family. Found in a ternary complex with CX3CL1 and ITGAV:ITGB3 or ITGA4:ITGB1. In terms of processing, this protein is not N-glycosylated which is unusual for G-protein-coupled receptors. In terms of tissue distribution, specifically expressed in subsets of leukocytes: expressed in monocytes, subsets of T-cells and natural killer (NK) cells in the circulation, dendritic cells, as well as in microglia in the central nervous system (CNS). Expression level subdivides blood monocytes into two major functional subsets; CD14(+)CD16(-)-CX3CR1(low) inflammatory monocytes and CD14(low)CD16(+)CX3CR1(high) homeostatic monocytes. Expressed in myeloid-derived mucosal dendritic cells, which populate the entire lamina propria of the small intestine.

It localises to the cell membrane. Its function is as follows. Receptor for the C-X3-C chemokine fractalkine (CX3CL1) present on many early leukocyte cells; CX3CR1-CX3CL1 signaling exerts distinct functions in different tissue compartments, such as immune response, inflammation, cell adhesion and chemotaxis. CX3CR1-CX3CL1 signaling mediates cell migratory functions. Responsible for the recruitment of natural killer (NK) cells to inflamed tissues. Acts as a regulator of inflammation process leading to atherogenesis by mediating macrophage and monocyte recruitment to inflamed atherosclerotic plaques, promoting cell survival. Involved in airway inflammation by promoting interleukin 2-producing T helper (Th2) cell survival in inflamed lung. Involved in the migration of circulating monocytes to non-inflamed tissues, where they differentiate into macrophages and dendritic cells. Acts as a negative regulator of angiogenesis, probably by promoting macrophage chemotaxis. Plays a key role in brain microglia by regulating inflammatory response in the central nervous system (CNS) and regulating synapse maturation. Required to restrain the microglial inflammatory response in the CNS and the resulting parenchymal damage in response to pathological stimuli. Involved in brain development by participating in synaptic pruning, a natural process during which brain microglia eliminates extra synapses during postnatal development. Synaptic pruning by microglia is required to promote the maturation of circuit connectivity during brain development. Acts as an important regulator of the gut microbiota by controlling immunity to intestinal bacteria and fungi. Expressed in lamina propria dendritic cells in the small intestine, which form transepithelial dendrites capable of taking up bacteria in order to provide defense against pathogenic bacteria. Required to initiate innate and adaptive immune responses against dissemination of commensal fungi (mycobiota) component of the gut: expressed in mononuclear phagocytes (MNPs) and acts by promoting induction of antifungal IgG antibodies response to confer protection against disseminated C.albicans or C.auris infection. Also acts as a receptor for C-C motif chemokine CCL26, inducing cell chemotaxis. This is CX3C chemokine receptor 1 from Mus musculus (Mouse).